Consider the following 399-residue polypeptide: tRNA-specific 2-thiouridylase MnmA (399 aa).

ATP is bound by residues 18-25 (AMSGGVDS) and Leu44. Cys112 serves as the catalytic Nucleophile. Cys112 and Cys213 are joined by a disulfide. ATP is bound at residue Gly136. The segment at 163–165 (RDQ) is interaction with tRNA. Cys213 functions as the Cysteine persulfide intermediate in the catalytic mechanism.

This sequence belongs to the MnmA/TRMU family.

Its subcellular location is the cytoplasm. It carries out the reaction S-sulfanyl-L-cysteinyl-[protein] + uridine(34) in tRNA + AH2 + ATP = 2-thiouridine(34) in tRNA + L-cysteinyl-[protein] + A + AMP + diphosphate + H(+). In terms of biological role, catalyzes the 2-thiolation of uridine at the wobble position (U34) of tRNA, leading to the formation of s(2)U34. This Rhizobium leguminosarum bv. trifolii (strain WSM2304) protein is tRNA-specific 2-thiouridylase MnmA.